The sequence spans 286 residues: Thymidylate synthase (286 aa).

140–141 (RR) contributes to the dUMP binding site. Cys-161 (nucleophile) is an active-site residue. DUMP-binding positions include 185–188 (RSND), Asn-196, and 226–228 (HIY). Residue Asp-188 participates in (6R)-5,10-methylene-5,6,7,8-tetrahydrofolate binding. Ala-285 serves as a coordination point for (6R)-5,10-methylene-5,6,7,8-tetrahydrofolate.

It belongs to the thymidylate synthase family. Bacterial-type ThyA subfamily. As to quaternary structure, homodimer.

It localises to the cytoplasm. It catalyses the reaction dUMP + (6R)-5,10-methylene-5,6,7,8-tetrahydrofolate = 7,8-dihydrofolate + dTMP. Its pathway is pyrimidine metabolism; dTTP biosynthesis. Its function is as follows. Catalyzes the reductive methylation of 2'-deoxyuridine-5'-monophosphate (dUMP) to 2'-deoxythymidine-5'-monophosphate (dTMP) while utilizing 5,10-methylenetetrahydrofolate (mTHF) as the methyl donor and reductant in the reaction, yielding dihydrofolate (DHF) as a by-product. This enzymatic reaction provides an intracellular de novo source of dTMP, an essential precursor for DNA biosynthesis. The polypeptide is Thymidylate synthase (Streptococcus thermophilus (strain CNRZ 1066)).